An 873-amino-acid chain; its full sequence is Bifunctional uridylyltransferase/uridylyl-removing enzyme (873 aa).

The uridylyltransferase stretch occupies residues 1–332 (MPYQCPITFN…NGGQTQEAEI (332 aa)). Residues 333–692 (LDNDFQRRGS…ISKKATRGGT (360 aa)) form a uridylyl-removing region. Residues 451 to 573 (VDEHSIRLLK…VRDEESLELL (123 aa)) form the HD domain. 2 ACT domains span residues 693-777 (EVFV…RTPR) and 800-873 (LMEL…ELAP).

This sequence belongs to the GlnD family. The cofactor is Mg(2+).

It catalyses the reaction [protein-PII]-L-tyrosine + UTP = [protein-PII]-uridylyl-L-tyrosine + diphosphate. The enzyme catalyses [protein-PII]-uridylyl-L-tyrosine + H2O = [protein-PII]-L-tyrosine + UMP + H(+). Uridylyltransferase (UTase) activity is inhibited by glutamine, while glutamine activates uridylyl-removing (UR) activity. Functionally, modifies, by uridylylation and deuridylylation, the PII regulatory proteins (GlnB and homologs), in response to the nitrogen status of the cell that GlnD senses through the glutamine level. Under low glutamine levels, catalyzes the conversion of the PII proteins and UTP to PII-UMP and PPi, while under higher glutamine levels, GlnD hydrolyzes PII-UMP to PII and UMP (deuridylylation). Thus, controls uridylylation state and activity of the PII proteins, and plays an important role in the regulation of nitrogen assimilation and metabolism. This is Bifunctional uridylyltransferase/uridylyl-removing enzyme from Vibrio atlanticus (strain LGP32) (Vibrio splendidus (strain Mel32)).